Reading from the N-terminus, the 358-residue chain is Ion-translocating oxidoreductase complex subunit D (358 aa).

The next 4 helical transmembrane spans lie at 19-39 (IMLWVILAMMPAFFTQIYYFG), 41-61 (GVVLQSALAIGTAIIAEFIAI), 79-99 (LTALILAMAIPPYAPYWIIII), and 125-145 (IGYVILLISFPLQMTTWMPPI). FMN phosphoryl threonine is present on Thr186. 5 consecutive transmembrane segments (helical) span residues 220–240 (FAQGWWQINVAFLAGGIFLIL), 248–268 (IPVAMLVTFFCLATATAFTGF), 271–291 (LSAISQLVSGAMMFGAFFIAT), 297–317 (SITPRGKIIFGALVGLFVYLI), and 321–341 (GNYPDGVAFAILLSNICVPLI).

This sequence belongs to the NqrB/RnfD family. In terms of assembly, the complex is composed of six subunits: RnfA, RnfB, RnfC, RnfD, RnfE and RnfG. FMN serves as cofactor.

The protein localises to the cell inner membrane. In terms of biological role, part of a membrane-bound complex that couples electron transfer with translocation of ions across the membrane. The chain is Ion-translocating oxidoreductase complex subunit D from Haemophilus influenzae (strain 86-028NP).